The sequence spans 173 residues: uncharacterized protein (173 aa).

Positions 80 to 107 (HSATVKRTDSSHRLKSHVVDKRPRRSLD) are disordered. A compositionally biased stretch (basic and acidic residues) spans 85 to 107 (KRTDSSHRLKSHVVDKRPRRSLD).

This is an uncharacterized protein from Autographa californica nuclear polyhedrosis virus (AcMNPV).